Reading from the N-terminus, the 86-residue chain is YcgL domain-containing protein XCC3997 (86 aa).

The region spanning 1–83 (MHAYVYKSQR…PKTVVLAGEC (83 aa)) is the YcgL domain.

In Xanthomonas campestris pv. campestris (strain ATCC 33913 / DSM 3586 / NCPPB 528 / LMG 568 / P 25), this protein is YcgL domain-containing protein XCC3997.